We begin with the raw amino-acid sequence, 494 residues long: Glutamate decarboxylase 2 (494 aa).

At Lys-276 the chain carries N6-(pyridoxal phosphate)lysine. Residues 463 to 494 form a calmodulin-binding region; sequence VKEKKMEKEILMEVIVGWRKFVKERKKMNGVC.

Belongs to the group II decarboxylase family. As to quaternary structure, homohexamer. Interacts with calmodulin. Pyridoxal 5'-phosphate is required as a cofactor. Expressed in roots, inflorescence stems, flowers, siliques and leaves.

It carries out the reaction L-glutamate + H(+) = 4-aminobutanoate + CO2. Up-regulated by calmodulin binding at physiological pH. Its function is as follows. Catalyzes the conversion of glutamate to 4-aminobutanoate (GABA). The calmodulin-binding is calcium-dependent and it is proposed to directly or indirectly form a calcium regulated control of GABA biosynthesis. The polypeptide is Glutamate decarboxylase 2 (GAD2) (Arabidopsis thaliana (Mouse-ear cress)).